The sequence spans 911 residues: FIGNL1-interacting regulator of recombination and mitosis (911 aa).

The interval 830-853 (SEKSQPAQTPLTEEPCAKRARQET) is disordered. A compositionally biased stretch (basic and acidic residues) spans 844-853 (PCAKRARQET).

The protein resides in the chromosome. The protein localises to the centromere. It localises to the kinetochore. It is found in the nucleus. Its subcellular location is the midbody. The protein resides in the cytoplasm. The protein localises to the cytoskeleton. It localises to the spindle. Functionally, may play a role in chromosome segregation. The chain is FIGNL1-interacting regulator of recombination and mitosis from Danio rerio (Zebrafish).